A 260-amino-acid polypeptide reads, in one-letter code: Type III pantothenate kinase (260 aa).

Residue 6–13 (DAGNTNIV) coordinates ATP. 108-111 (GADR) serves as a coordination point for substrate. Asp-110 (proton acceptor) is an active-site residue. Asp-130 is a K(+) binding site. Thr-133 is a binding site for ATP. Residue Thr-187 coordinates substrate.

This sequence belongs to the type III pantothenate kinase family. In terms of assembly, homodimer. Requires NH4(+) as cofactor. The cofactor is K(+).

It is found in the cytoplasm. It carries out the reaction (R)-pantothenate + ATP = (R)-4'-phosphopantothenate + ADP + H(+). Its pathway is cofactor biosynthesis; coenzyme A biosynthesis; CoA from (R)-pantothenate: step 1/5. In terms of biological role, catalyzes the phosphorylation of pantothenate (Pan), the first step in CoA biosynthesis. The sequence is that of Type III pantothenate kinase from Rhizorhabdus wittichii (strain DSM 6014 / CCUG 31198 / JCM 15750 / NBRC 105917 / EY 4224 / RW1) (Sphingomonas wittichii).